The chain runs to 720 residues: Methionine--tRNA ligase (720 aa).

Positions 27–37 match the 'HIGH' region motif; it reads PYANGQIHIGH. Cys-158, Cys-161, Cys-171, and Cys-174 together coordinate Zn(2+). Residues 348–352 carry the 'KMSKS' region motif; the sequence is KMSKS. Position 351 (Lys-351) interacts with ATP. The 107-residue stretch at 614 to 720 folds into the tRNA-binding domain; that stretch reads DFAKIDLRIA…SGAKPGMRVK (107 aa).

It belongs to the class-I aminoacyl-tRNA synthetase family. MetG type 1 subfamily. In terms of assembly, homodimer. Zn(2+) is required as a cofactor.

It is found in the cytoplasm. The catalysed reaction is tRNA(Met) + L-methionine + ATP = L-methionyl-tRNA(Met) + AMP + diphosphate. Its function is as follows. Is required not only for elongation of protein synthesis but also for the initiation of all mRNA translation through initiator tRNA(fMet) aminoacylation. This chain is Methionine--tRNA ligase, found in Burkholderia lata (strain ATCC 17760 / DSM 23089 / LMG 22485 / NCIMB 9086 / R18194 / 383).